Reading from the N-terminus, the 145-residue chain is D-aminoacyl-tRNA deacylase (145 aa).

The Gly-cisPro motif, important for rejection of L-amino acids motif lies at 137–138 (GP).

This sequence belongs to the DTD family. In terms of assembly, homodimer.

The protein localises to the cytoplasm. The enzyme catalyses glycyl-tRNA(Ala) + H2O = tRNA(Ala) + glycine + H(+). It carries out the reaction a D-aminoacyl-tRNA + H2O = a tRNA + a D-alpha-amino acid + H(+). Its function is as follows. An aminoacyl-tRNA editing enzyme that deacylates mischarged D-aminoacyl-tRNAs. Also deacylates mischarged glycyl-tRNA(Ala), protecting cells against glycine mischarging by AlaRS. Acts via tRNA-based rather than protein-based catalysis; rejects L-amino acids rather than detecting D-amino acids in the active site. By recycling D-aminoacyl-tRNA to D-amino acids and free tRNA molecules, this enzyme counteracts the toxicity associated with the formation of D-aminoacyl-tRNA entities in vivo and helps enforce protein L-homochirality. The sequence is that of D-aminoacyl-tRNA deacylase from Shewanella pealeana (strain ATCC 700345 / ANG-SQ1).